The primary structure comprises 321 residues: Cytochrome c biogenesis protein CcsA (321 aa).

8 consecutive transmembrane segments (helical) span residues 1–21 (MIFI…ISVV), 36–56 (LSSS…GLLI), 70–90 (LYES…ILEV), 97–117 (GLGA…TSGL), 143–163 (ILLS…FLII), 229–249 (VIGL…VWAN), 256–276 (WSWD…AIYL), and 290–310 (AIIA…VDLL).

It belongs to the CcmF/CycK/Ccl1/NrfE/CcsA family. May interact with Ccs1.

It is found in the plastid. It localises to the chloroplast thylakoid membrane. Its function is as follows. Required during biogenesis of c-type cytochromes (cytochrome c6 and cytochrome f) at the step of heme attachment. The sequence is that of Cytochrome c biogenesis protein CcsA from Cycas taitungensis (Prince sago).